The primary structure comprises 227 residues: Urease accessory protein UreF (227 aa).

Belongs to the UreF family. As to quaternary structure, ureD, UreF and UreG form a complex that acts as a GTP-hydrolysis-dependent molecular chaperone, activating the urease apoprotein by helping to assemble the nickel containing metallocenter of UreC. The UreE protein probably delivers the nickel.

It localises to the cytoplasm. Required for maturation of urease via the functional incorporation of the urease nickel metallocenter. The polypeptide is Urease accessory protein UreF (Actinobacillus pleuropneumoniae (Haemophilus pleuropneumoniae)).